We begin with the raw amino-acid sequence, 110 residues long: Small ribosomal subunit protein bS16 (110 aa).

Residues 87–110 form a disordered region; the sequence is ARQNPIKAVPRKERKAQAEAAAKG.

Belongs to the bacterial ribosomal protein bS16 family.

This Bradyrhizobium sp. (strain BTAi1 / ATCC BAA-1182) protein is Small ribosomal subunit protein bS16.